Reading from the N-terminus, the 92-residue chain is Small ribosomal subunit protein bS18 (92 aa).

This sequence belongs to the bacterial ribosomal protein bS18 family. In terms of assembly, part of the 30S ribosomal subunit. Forms a tight heterodimer with protein bS6.

In terms of biological role, binds as a heterodimer with protein bS6 to the central domain of the 16S rRNA, where it helps stabilize the platform of the 30S subunit. The chain is Small ribosomal subunit protein bS18 from Pelagibacter ubique (strain HTCC1062).